The sequence spans 444 residues: Putative F-box protein At1g64540 (444 aa).

Residues 4–50 form the F-box domain; that stretch reads REFISNLPDEILGKILSLLPTKLGVSTSVLSKRWRNLILLVDNFDLE.

In Arabidopsis thaliana (Mouse-ear cress), this protein is Putative F-box protein At1g64540.